We begin with the raw amino-acid sequence, 420 residues long: 4-hydroxy-3-methylbut-2-en-1-yl diphosphate synthase (flavodoxin) (420 aa).

4 residues coordinate [4Fe-4S] cluster: C307, C310, C353, and E360.

Belongs to the IspG family. Requires [4Fe-4S] cluster as cofactor.

The enzyme catalyses (2E)-4-hydroxy-3-methylbut-2-enyl diphosphate + oxidized [flavodoxin] + H2O + 2 H(+) = 2-C-methyl-D-erythritol 2,4-cyclic diphosphate + reduced [flavodoxin]. The protein operates within isoprenoid biosynthesis; isopentenyl diphosphate biosynthesis via DXP pathway; isopentenyl diphosphate from 1-deoxy-D-xylulose 5-phosphate: step 5/6. Its function is as follows. Converts 2C-methyl-D-erythritol 2,4-cyclodiphosphate (ME-2,4cPP) into 1-hydroxy-2-methyl-2-(E)-butenyl 4-diphosphate. This chain is 4-hydroxy-3-methylbut-2-en-1-yl diphosphate synthase (flavodoxin), found in Brucella suis (strain ATCC 23445 / NCTC 10510).